The chain runs to 680 residues: DNA ligase (680 aa).

Residues 35–39, 84–85, and glutamate 115 each bind NAD(+); these read DAQYD and SL. Lysine 117 serves as the catalytic N6-AMP-lysine intermediate. Residues arginine 138, glutamate 174, lysine 291, and lysine 315 each coordinate NAD(+). Zn(2+)-binding residues include cysteine 419, cysteine 422, cysteine 437, and cysteine 442. Positions 601–680 constitute a BRCT domain; the sequence is NKNMPFSGME…REFINMLEQS (80 aa).

Belongs to the NAD-dependent DNA ligase family. LigA subfamily. The cofactor is Mg(2+). It depends on Mn(2+) as a cofactor.

It catalyses the reaction NAD(+) + (deoxyribonucleotide)n-3'-hydroxyl + 5'-phospho-(deoxyribonucleotide)m = (deoxyribonucleotide)n+m + AMP + beta-nicotinamide D-nucleotide.. In terms of biological role, DNA ligase that catalyzes the formation of phosphodiester linkages between 5'-phosphoryl and 3'-hydroxyl groups in double-stranded DNA using NAD as a coenzyme and as the energy source for the reaction. It is essential for DNA replication and repair of damaged DNA. The protein is DNA ligase of Dehalococcoides mccartyi (strain ATCC BAA-2100 / JCM 16839 / KCTC 5957 / BAV1).